Here is a 395-residue protein sequence, read N- to C-terminus: Multidrug resistance protein MdtL (395 aa).

The next 12 helical transmembrane spans lie at 4 to 24, 42 to 62, 69 to 89, 93 to 113, 131 to 151, 158 to 178, 217 to 237, 247 to 267, 271 to 291, 295 to 315, 328 to 350, and 355 to 377; these read FLLC…MYLV, IAFS…GKIA, PVAI…SRAS, LFLS…VVAF, LLNG…HLIM, SLFY…LFIL, VSVI…VMGF, ALTA…LGLF, TLML…SLAH, VTLF…GVAM, VASS…LAAI, and AMNM…IFSV.

Belongs to the major facilitator superfamily. DHA1 family. MdtL (TC 2.A.1.2.22) subfamily.

It is found in the cell inner membrane. The polypeptide is Multidrug resistance protein MdtL (Salmonella dublin (strain CT_02021853)).